The following is a 499-amino-acid chain: Glutamyl-tRNA(Gln) amidotransferase subunit A (499 aa).

Active-site charge relay system residues include Lys79 and Ser159. Ser183 serves as the catalytic Acyl-ester intermediate.

This sequence belongs to the amidase family. GatA subfamily. As to quaternary structure, heterotrimer of A, B and C subunits.

It catalyses the reaction L-glutamyl-tRNA(Gln) + L-glutamine + ATP + H2O = L-glutaminyl-tRNA(Gln) + L-glutamate + ADP + phosphate + H(+). Functionally, allows the formation of correctly charged Gln-tRNA(Gln) through the transamidation of misacylated Glu-tRNA(Gln) in organisms which lack glutaminyl-tRNA synthetase. The reaction takes place in the presence of glutamine and ATP through an activated gamma-phospho-Glu-tRNA(Gln). This chain is Glutamyl-tRNA(Gln) amidotransferase subunit A, found in Granulibacter bethesdensis (strain ATCC BAA-1260 / CGDNIH1).